Here is a 119-residue protein sequence, read N- to C-terminus: Large ribosomal subunit protein eL31 (119 aa).

This sequence belongs to the eukaryotic ribosomal protein eL31 family.

In Cyanophora paradoxa, this protein is Large ribosomal subunit protein eL31 (RPL31).